The following is an 87-amino-acid chain: U3-theraphotoxin-Hhn1a 6 (87 aa).

Positions 1 to 24 are cleaved as a signal peptide; that stretch reads MVNMKASMFLTFAGLVLLFVVCYA. Positions 25 to 52 are excised as a propeptide; sequence SESEKKEFPKEMLSSIFAVDNDFKQEER. 3 disulfides stabilise this stretch: Cys54/Cys67, Cys61/Cys72, and Cys66/Cys79.

Belongs to the neurotoxin 10 (Hwtx-1) family. 51 (Hntx-8) subfamily. Hntx-8 sub-subfamily. As to expression, expressed by the venom gland.

It localises to the secreted. Its function is as follows. Ion channel inhibitor. The chain is U3-theraphotoxin-Hhn1a 6 from Cyriopagopus hainanus (Chinese bird spider).